The primary structure comprises 416 residues: uncharacterized protein (416 aa).

Zn(2+) contacts are provided by His29, Asp31, Glu144, His215, and His236.

Belongs to the metallo-dependent hydrolases superfamily. Peptidase M19 family. The cofactor is Zn(2+).

It catalyses the reaction an L-aminoacyl-L-amino acid + H2O = 2 an L-alpha-amino acid. This is an uncharacterized protein from Schizosaccharomyces pombe (strain 972 / ATCC 24843) (Fission yeast).